The primary structure comprises 245 residues: 1-(5-phosphoribosyl)-5-[(5-phosphoribosylamino)methylideneamino] imidazole-4-carboxamide isomerase (245 aa).

The active-site Proton acceptor is the aspartate 7. Aspartate 129 acts as the Proton donor in catalysis.

This sequence belongs to the HisA/HisF family.

It is found in the cytoplasm. The enzyme catalyses 1-(5-phospho-beta-D-ribosyl)-5-[(5-phospho-beta-D-ribosylamino)methylideneamino]imidazole-4-carboxamide = 5-[(5-phospho-1-deoxy-D-ribulos-1-ylimino)methylamino]-1-(5-phospho-beta-D-ribosyl)imidazole-4-carboxamide. The protein operates within amino-acid biosynthesis; L-histidine biosynthesis; L-histidine from 5-phospho-alpha-D-ribose 1-diphosphate: step 4/9. This Escherichia coli O7:K1 (strain IAI39 / ExPEC) protein is 1-(5-phosphoribosyl)-5-[(5-phosphoribosylamino)methylideneamino] imidazole-4-carboxamide isomerase.